A 400-amino-acid chain; its full sequence is MGFITKAIPLALAAASVINGAEIMETRAGVQTLADKYIVVMNDGMTDKDFDSHRSWVNRTHRRRLIRRGAKAMGGMKHTYRFPTGLKGYSGHFDEQMINEISKRADVKYIERDARVQINAIEQQDNVPSWGLARVGSKEPGGTTYYYDGTAGEGSTAYVIDTGTDIQHEEFEGRATWGANFVDDMDMDCNGHGTHVSGTIGGKTFGVAKKSNVVAVKVLDCNGSGSNSGVIMGMEWATKDAQQKGADKAVANMSLGGAFSQASNDAAAAIAQGGVFLAVAAGNDNVDAADSSPASEPSICTVAASTEQDGKADFSNFGQVVDVYAPGDSITSAKPGGGSQVLSGTSMATPHVAGLGAYLIGLGKGGGPGLCDTIKQMAIDVIQNPGASTTSKLINNGSGM.

An N-terminal signal peptide occupies residues 1–20 (MGFITKAIPLALAAASVING). Positions 21-119 (AEIMETRAGV…IERDARVQIN (99 aa)) are excised as a propeptide. An Inhibitor I9 domain is found at 36 to 118 (KYIVVMNDGM…YIERDARVQI (83 aa)). The N-linked (GlcNAc...) asparagine glycan is linked to N58. Residues 129 to 400 (SWGLARVGSK…SKLINNGSGM (272 aa)) form the Peptidase S8 domain. Residues D161 and H192 each act as charge relay system in the active site. N222 and N252 each carry an N-linked (GlcNAc...) asparagine glycan. S346 serves as the catalytic Charge relay system. N396 is a glycosylation site (N-linked (GlcNAc...) asparagine).

It belongs to the peptidase S8 family.

The protein localises to the secreted. Functionally, secreted subtilisin-like serine protease with keratinolytic activity that contributes to pathogenicity. The polypeptide is Subtilisin-like protease 7 (SUB7) (Trichophyton verrucosum (Cattle ringworm fungus)).